We begin with the raw amino-acid sequence, 278 residues long: Transmembrane protein 41B (278 aa).

Residues 1–31 (MQVHERSHTGGHTFQCNHGNEKKAPAAGKVH) form a disordered region. A run of 6 helical transmembrane segments spans residues 39–59 (MSLL…FLVY), 96–116 (FYVE…TFAI), 142–162 (CSGL…RPVV), 184–204 (LINY…FINI), 212–232 (PLKV…FVAI), and 249–269 (SWNS…PAIF). Positions 127-238 (GFLYPFPLAL…FVAIKAGTTL (112 aa)) are VTT domain; required for its function in autophagy.

The protein belongs to the TMEM41 family.

It is found in the endoplasmic reticulum membrane. It localises to the endomembrane system. It carries out the reaction a 1,2-diacyl-sn-glycero-3-phospho-L-serine(in) = a 1,2-diacyl-sn-glycero-3-phospho-L-serine(out). The catalysed reaction is cholesterol(in) = cholesterol(out). The enzyme catalyses a 1,2-diacyl-sn-glycero-3-phosphocholine(in) = a 1,2-diacyl-sn-glycero-3-phosphocholine(out). It catalyses the reaction a 1,2-diacyl-sn-glycero-3-phosphoethanolamine(in) = a 1,2-diacyl-sn-glycero-3-phosphoethanolamine(out). In terms of biological role, phospholipid scramblase involved in lipid homeostasis and membrane dynamics processes. Has phospholipid scramblase activity toward cholesterol and phosphatidylserine, as well as phosphatidylethanolamine and phosphatidylcholine. Required for autophagosome formation: participates in early stages of autophagosome biogenesis at the endoplasmic reticulum (ER) membrane by reequilibrating the leaflets of the ER as lipids are extracted by atg2 (atg2a or atg2b) to mediate autophagosome assembly. In addition to autophagy, involved in other processes in which phospholipid scramblase activity is required. Required for normal motor neuron development. The polypeptide is Transmembrane protein 41B (Xenopus laevis (African clawed frog)).